The primary structure comprises 279 residues: Lacto-N-neotetraose biosynthesis glycosyltransferase LgtB (279 aa).

Belongs to the glycosyltransferase 25 family.

The protein operates within glycan metabolism; lacto-N-neotetraose biosynthesis. It participates in bacterial outer membrane biogenesis; lipooligosaccharide biosynthesis. Its function is as follows. Adds the second galactose to the lacto-N-tetraose chain in lipooligosaccharide (LOS). In Neisseria gonorrhoeae, this protein is Lacto-N-neotetraose biosynthesis glycosyltransferase LgtB (lgtB).